The primary structure comprises 319 residues: ATP-dependent 6-phosphofructokinase (319 aa).

Glycine 11 contributes to the ATP binding site. 21–25 (RAVTR) provides a ligand contact to ADP. Residues 72–73 (RF) and 102–105 (GDGS) contribute to the ATP site. Position 103 (aspartate 103) interacts with Mg(2+). 125–127 (SID) is a binding site for substrate. Aspartate 127 serves as the catalytic Proton acceptor. Position 154 (arginine 154) interacts with ADP. Residues arginine 162 and 169 to 171 (MGR) contribute to the substrate site. Residues 185 to 187 (GAD) and 213 to 215 (KKH) contribute to the ADP site. Residues glutamate 222, arginine 243, and 249–252 (HMQR) each bind substrate.

This sequence belongs to the phosphofructokinase type A (PFKA) family. ATP-dependent PFK group I subfamily. Prokaryotic clade 'B1' sub-subfamily. In terms of assembly, homotetramer. Mg(2+) serves as cofactor.

It localises to the cytoplasm. The enzyme catalyses beta-D-fructose 6-phosphate + ATP = beta-D-fructose 1,6-bisphosphate + ADP + H(+). It participates in carbohydrate degradation; glycolysis; D-glyceraldehyde 3-phosphate and glycerone phosphate from D-glucose: step 3/4. Its activity is regulated as follows. Allosterically activated by ADP and other diphosphonucleosides, and allosterically inhibited by phosphoenolpyruvate. In terms of biological role, catalyzes the phosphorylation of D-fructose 6-phosphate to fructose 1,6-bisphosphate by ATP, the first committing step of glycolysis. This chain is ATP-dependent 6-phosphofructokinase, found in Lactobacillus gasseri (strain ATCC 33323 / DSM 20243 / BCRC 14619 / CIP 102991 / JCM 1131 / KCTC 3163 / NCIMB 11718 / NCTC 13722 / AM63).